The chain runs to 240 residues: Proteasome subunit alpha (240 aa).

The protein belongs to the peptidase T1A family. In terms of assembly, the 20S proteasome core is composed of 14 alpha and 14 beta subunits that assemble into four stacked heptameric rings, resulting in a barrel-shaped structure. The two inner rings, each composed of seven catalytic beta subunits, are sandwiched by two outer rings, each composed of seven alpha subunits. The catalytic chamber with the active sites is on the inside of the barrel. Has a gated structure, the ends of the cylinder being occluded by the N-termini of the alpha-subunits. Is capped at one or both ends by the proteasome regulatory ATPase, PAN.

The protein resides in the cytoplasm. With respect to regulation, the formation of the proteasomal ATPase PAN-20S proteasome complex, via the docking of the C-termini of PAN into the intersubunit pockets in the alpha-rings, triggers opening of the gate for substrate entry. Interconversion between the open-gate and close-gate conformations leads to a dynamic regulation of the 20S proteasome proteolysis activity. In terms of biological role, component of the proteasome core, a large protease complex with broad specificity involved in protein degradation. This Methanoculleus marisnigri (strain ATCC 35101 / DSM 1498 / JR1) protein is Proteasome subunit alpha.